Reading from the N-terminus, the 374-residue chain is uncharacterized protein (374 aa).

The segment covering 86-104 (RPAATAGTTPATGASGSAR) has biased composition (low complexity). The interval 86–109 (RPAATAGTTPATGASGSARPTDAA) is disordered. Residues 179-354 (WWRRSNTTRG…LQRVVFAVHG (176 aa)) form the Macro domain.

This is an uncharacterized protein from Mycobacterium tuberculosis (strain CDC 1551 / Oshkosh).